The primary structure comprises 481 residues: Beta-amyrin 16-beta-monooxygenase (481 aa).

The helical transmembrane segment at 4 to 24 (LFIIISLVIVILTTIFILSNL) threads the bilayer. Cys428 lines the heme pocket.

This sequence belongs to the cytochrome P450 family. The cofactor is heme. In terms of tissue distribution, highly expressed in roots. Expressed at very low levels in leaves and petals.

Its subcellular location is the membrane. It catalyses the reaction beta-amyrin + reduced [NADPH--hemoprotein reductase] + O2 = maniladiol + oxidized [NADPH--hemoprotein reductase] + H2O + H(+). It carries out the reaction oleanolate + reduced [NADPH--hemoprotein reductase] + O2 = cochalate + oxidized [NADPH--hemoprotein reductase] + H2O + H(+). Its function is as follows. Involved in triterpenoid saponin biosynthesis in roots. Catalyzes the hydroxylation of beta-amyrin at the C-16 beta position to form maniladiol. Is also able to oxidize oleanolat to cochalate. Has weak activity catalyzing the three-step oxidation at C-28 of beta-amyrin to form oleanolate. In Platycodon grandiflorus (Balloon flower), this protein is Beta-amyrin 16-beta-monooxygenase.